Here is a 357-residue protein sequence, read N- to C-terminus: UDP-N-acetylglucosamine--N-acetylmuramyl-(pentapeptide) pyrophosphoryl-undecaprenol N-acetylglucosamine transferase (357 aa).

Residues 15-17, asparagine 125, serine 190, and glutamine 290 each bind UDP-N-acetyl-alpha-D-glucosamine; that span reads SGG.

It belongs to the glycosyltransferase 28 family. MurG subfamily.

It localises to the cell inner membrane. It carries out the reaction di-trans,octa-cis-undecaprenyl diphospho-N-acetyl-alpha-D-muramoyl-L-alanyl-D-glutamyl-meso-2,6-diaminopimeloyl-D-alanyl-D-alanine + UDP-N-acetyl-alpha-D-glucosamine = di-trans,octa-cis-undecaprenyl diphospho-[N-acetyl-alpha-D-glucosaminyl-(1-&gt;4)]-N-acetyl-alpha-D-muramoyl-L-alanyl-D-glutamyl-meso-2,6-diaminopimeloyl-D-alanyl-D-alanine + UDP + H(+). It participates in cell wall biogenesis; peptidoglycan biosynthesis. In terms of biological role, cell wall formation. Catalyzes the transfer of a GlcNAc subunit on undecaprenyl-pyrophosphoryl-MurNAc-pentapeptide (lipid intermediate I) to form undecaprenyl-pyrophosphoryl-MurNAc-(pentapeptide)GlcNAc (lipid intermediate II). This Chlamydia pneumoniae (Chlamydophila pneumoniae) protein is UDP-N-acetylglucosamine--N-acetylmuramyl-(pentapeptide) pyrophosphoryl-undecaprenol N-acetylglucosamine transferase.